A 294-amino-acid polypeptide reads, in one-letter code: Putative inactive magnesium transporter MRS2-8 (294 aa).

Positions 179 to 216 form a coiled coil; the sequence is KLKSSMTRLTAQVQKIKDELEQLLEDDEDMAELYLSRK.

The protein belongs to the CorA metal ion transporter (MIT) (TC 1.A.35.5) family.

The polypeptide is Putative inactive magnesium transporter MRS2-8 (MRS2-8) (Arabidopsis thaliana (Mouse-ear cress)).